The chain runs to 279 residues: MTQVYDGFVHLGFSNRNGRTISHKKYQEGNSRVSADNSDANGVPYYFLINMGGGFVEGEQYQVTIDVNKDAHALVTTQTPTYVYKCEKGQLTQQNTSITLEENSYLEYMADEVIPYLKSRYFQTSRIDMDKSAHLIYSDGVTAGWSHEDLPFQYHYFRNLTQIYQDNELVYSDQTLLEPEKQDMFKLGYFEGWRNYNSLVMVSPNIDETFVKALQKHLEGLNLESDFAISSLDISGLVLRILGRTAEDNRRIIYSCADYFRQEIHGLTPLNLRKNDMRR.

The protein belongs to the UreD family. As to quaternary structure, ureD, UreF and UreG form a complex that acts as a GTP-hydrolysis-dependent molecular chaperone, activating the urease apoprotein by helping to assemble the nickel containing metallocenter of UreC. The UreE protein probably delivers the nickel.

It localises to the cytoplasm. Its function is as follows. Required for maturation of urease via the functional incorporation of the urease nickel metallocenter. In Streptococcus thermophilus (strain CNRZ 1066), this protein is Urease accessory protein UreD.